We begin with the raw amino-acid sequence, 417 residues long: MLKREMNIADYDAELWQAMEQEKVRQEEHIELIASENYTSPRVMQAQGSQLTNKYAEGYPGKRYYGGCEYVDVVEQLAIDRAKELFGADYANVQPHSGSQANFAVYTALLQPGDTVLGMNLAQGGHLTHGSPVNFSGKLYNIVPYGIDESGKIDYDEMAKLAKEHKPKMIIGGFSAYSGVVDWAKMREIADSIGAYLFVDMAHVAGLIAAGVYPNPVPHAHVVTTTTHKTLAGPRGGLILAKGGDEELYKKLNSAVFPSAQGGPLMHVIAGKAVALKEAMEPEFKVYQQQVAKNAKAMVEVFLNRGYKVVSGGTENHLFLLDLVDKNLTGKEADAALGRANITVNKNSVPNDPKSPFVTSGIRIGSPAVTRRGFKEAEVKELAGWMCDVLDNINDEATIERVKAKVLDICARFPVYA.

(6S)-5,6,7,8-tetrahydrofolate-binding positions include Leu121 and 125 to 127; that span reads GHL. Lys229 carries the post-translational modification N6-(pyridoxal phosphate)lysine. A (6S)-5,6,7,8-tetrahydrofolate-binding site is contributed by 355-357; sequence SPF.

Belongs to the SHMT family. Homodimer. Pyridoxal 5'-phosphate is required as a cofactor.

It is found in the cytoplasm. It catalyses the reaction (6R)-5,10-methylene-5,6,7,8-tetrahydrofolate + glycine + H2O = (6S)-5,6,7,8-tetrahydrofolate + L-serine. The protein operates within one-carbon metabolism; tetrahydrofolate interconversion. Its pathway is amino-acid biosynthesis; glycine biosynthesis; glycine from L-serine: step 1/1. Functionally, catalyzes the reversible interconversion of serine and glycine with tetrahydrofolate (THF) serving as the one-carbon carrier. This reaction serves as the major source of one-carbon groups required for the biosynthesis of purines, thymidylate, methionine, and other important biomolecules. Also exhibits THF-independent aldolase activity toward beta-hydroxyamino acids, producing glycine and aldehydes, via a retro-aldol mechanism. The sequence is that of Serine hydroxymethyltransferase from Salmonella choleraesuis (strain SC-B67).